A 261-amino-acid polypeptide reads, in one-letter code: DNA repair protein RecO (261 aa).

It belongs to the RecO family.

Involved in DNA repair and RecF pathway recombination. The sequence is that of DNA repair protein RecO from Limosilactobacillus reuteri (strain DSM 20016) (Lactobacillus reuteri).